The chain runs to 968 residues: Angiomotin-like protein 1 (968 aa).

Composition is skewed to polar residues over residues 152-164 (VYQS…QGQE) and 177-187 (RSTQPQQNNEE). A disordered region spans residues 152-258 (VYQSARQEPQ…NRANSGQAHK (107 aa)). A compositionally biased stretch (low complexity) spans 203–224 (GQQQQQQQQQQQQQQQQQQGQG). Phosphoserine is present on residues Ser253, Ser281, and Ser307. A coiled-coil region spans residues 271–291 (RSLSERIMQLSLERNGAKQHL). Residues 285–343 (NGAKQHLPSSGNGKSFKAGGEPSPAQPVCKALDPRGPPPEYPFKTKPMKSPVSKNQDHG) are disordered. Coiled coils occupy residues 449–645 (VERA…RRLR) and 676–705 (ALME…YLEE). The tract at residues 721–742 (AERDTTISNHSRNGSYGESSLE) is disordered. Over residues 726-738 (TISNHSRNGSYGE) the composition is skewed to polar residues. Ser731 is subject to Phosphoserine. Residues 748-773 (EEEEVVQANRRCQDMEYTIKNLHAKI) are a coiled coil. The disordered stretch occupies residues 785–834 (QRSRKDAGKTDSASLRPARSVPSIAAATGTHSRQTSLTSSQLTEEKKEEK). Residues Ser804, Ser816, and Ser840 each carry the phosphoserine modification. Residues 853–878 (ASAPLLPTTPASALSLPASTTSASST) show a composition bias toward low complexity. The segment at 853–956 (ASAPLLPTTP…GRVSNLLHKP (104 aa)) is disordered. Ser912 and Ser918 each carry phosphoserine. The short motif at 965–968 (EVLI) is the PDZ-binding element.

It belongs to the angiomotin family. In terms of processing, polyubiquitinated by NEDD4, leading to proteasomal degradation. As to expression, expressed in exocrine glands, including pancreas, submandibular gland, lacrimal gland, parotid gland and sublingual gland (at protein level).

Its subcellular location is the cell junction. The protein localises to the tight junction. Functionally, inhibits the Wnt/beta-catenin signaling pathway, probably by recruiting CTNNB1 to recycling endosomes and hence preventing its translocation to the nucleus. The protein is Angiomotin-like protein 1 (Amotl1) of Mus musculus (Mouse).